The following is a 208-amino-acid chain: uncharacterized protein (208 aa).

A signal peptide spans 1-16 (MTRVALLTTGRELSQA). Disordered stretches follow at residues 1 to 95 (MTRV…VRGQ) and 145 to 176 (RVTKVSSSGPNSTPLPAARIGPGTNNAPSAAD). Over residues 16 to 25 (AAPPARARTP) the composition is skewed to low complexity. A compositionally biased stretch (basic and acidic residues) spans 32 to 43 (RGERPDDGGHAP). Residues 44-54 (HRDRRVNQRRR) are compositionally biased toward basic residues. The span at 55 to 95 (QVGDRRAQRGVDEHPWRRPDERPNDHLPQRNSERPEGVRGQ) shows a compositional bias: basic and acidic residues. Polar residues-rich tracts occupy residues 148–158 (KVSSSGPNSTP) and 167–176 (GTNNAPSAAD).

This is an uncharacterized protein from Mycobacterium tuberculosis (strain CDC 1551 / Oshkosh).